Consider the following 1013-residue polypeptide: Nucleotide-binding oligomerization domain-containing protein 2 (1013 aa).

CARD domains lie at 1-82 (MCSQ…AVQE) and 107-178 (LQSH…HVQK). An ATG16L1-binding motif motif is present at residues 36 to 50 (WEVLSWEDYEGLRLV). ADP contacts are provided by Thr-212, Tyr-225, Thr-226, Gly-275, Ser-276, Gly-277, Lys-278, Ser-279, and Thr-280. Residues 214-247 (DGAENLCLEDIYTENTLEVRTEVGMAGPLHKSPA) are required for CARD9 binding. An NACHT domain is found at 266-402 (DTVLVVGEAG…RKVLTSRPDA (137 aa)). 272–279 (GEAGSGKS) contributes to the ATP binding site. Cys-368 carries the S-palmitoyl cysteine lipid modification. His-576 is a binding site for ADP. LRR repeat units lie at residues 764-785 (RPVALQLDHNSVGDIGVEQLLP), 789-812 (ACKALYLRDNNISDRGICKLIEHA), 817-838 (QLQKLALFNNKLTDGCAHSVAQ), 845-857 (NFLALRLGNNHIT), 873-893 (SLQFLGFWGNKVGDKGAQALA), 901-922 (SLKWLSLVGNNIGSVGAQALAS), 929-949 (ALEELCLEENHLQDAGVCSLA), 957-978 (SLKVLKLSNNCITFVGAEALLQ), and 985-1005 (TILEVWLRGNPFSPEEMEALS).

Belongs to the NOD1-NOD2 family. In terms of assembly, homooligomer: homooligomerizes following muramyl dipeptide (MDP)-binding, promoting RIPK2 recruitment. Interacts (via CARD domain) with RIPK2 (via CARD domain). Following RIPK2 recruitment, RIPK2 homooligomerizes via its CARD domain and forms long filaments named RIPosomes. Interacts (via CARD domain) with ubiquitin; inhibiting interaction with RIPK2. Component of a signaling complex consisting of ARHGEF2, NOD2 and RIPK2. Interacts with ANKRD17 (via N-terminus). Interacts with HSPA1A; the interaction enhances NOD2 stability. Interacts (via both CARD domains) with HSP90; the interaction enhances NOD2 stability. Interacts (via CARD domain) with SOCS3; the interaction promotes NOD2 degradation. Interacts (via CARD domain) with ERBIN; the interaction inhibits activation of NOD2. Interacts with MAPKBP1; the interaction is enhanced in the presence of muramyl dipeptide (MDP) and inhibits NOD2 homooligomerization and activation. Interacts with INAVA; the interaction takes place upon Pattern recognition receptor (PRR) stimulation. Interacts (via NACHT domain) with CARD9. Interacts (via CARD domain) with CASP1; this interaction leads to IL1B processing. Also interacts with CASP4. Interacts with NLRP1; this interaction is enhanced in the presence of muramyl dipeptide (MDP) and leads to increased IL1B release. Interacts with NLRP12; this interaction promotes degradation of NOD2 through the ubiquitin-proteasome pathway. Interacts with ANKHD1, C10orf67, CHMP5, DOCK7, ENTR1, KRT15, LDOC1, PPP1R12C, PPP2R3B, TRIM41 and VIM. Interacts with MAVS; interaction takes place following single-stranded RNA (ssRNA)-binding. Interacts with ATG16L1. Interacts with IRGM; promoting IRGM 'Lys-63'-linked polyubiquitination, which is required for interactions with the core autophagy factors. Post-translationally, palmitoylated by ZDHHC5; palmitoylation is required for proper recruitment to the bacterial entry site and hence for proper signaling upon cognate peptidoglycan detection. Palmitoylation promotes localization to the cell membrane. Palmitoylation protects from SQSTM1/p62-dependent autophagic degradation. Polyubiquitinated by TRIM27, leading to proteasome-mediated degradation. Polyubiquitinated and degraded following muramyl dipeptide (MDP) stimulation, conferring MDP tolerance and preventing septic shock. In terms of processing, degraded via selective autophagy following interaction with IRGM. IRGM promotes NOD2-RIPK2 RIPosome recruitment to autophagosome membranes, promoting their SQSTM1/p62-dependent autophagic degradation. Post-translationally, O-glycosylated by OGT, O-GlcNAcylation increases protein stability.

It localises to the cell membrane. Its subcellular location is the basolateral cell membrane. It is found in the cytoplasm. The protein localises to the mitochondrion. With respect to regulation, ADP-binding promotes an inactive closed conformation. Functionally, pattern recognition receptor (PRR) that detects bacterial peptidoglycan fragments and other danger signals and plays an important role in gastrointestinal immunity. Specifically activated by muramyl dipeptide (MDP), a fragment of bacterial peptidoglycan found in every bacterial peptidoglycan type. NOD2 specifically recognizes and binds 6-O-phospho-MDP, the phosphorylated form of MDP, which is generated by NAGK. 6-O-phospho-MDP-binding triggers oligomerization that facilitates the binding and subsequent activation of the proximal adapter receptor-interacting RIPK2. Following recruitment, RIPK2 undergoes 'Met-1'- (linear) and 'Lys-63'-linked polyubiquitination by E3 ubiquitin-protein ligases XIAP, BIRC2, BIRC3 and the LUBAC complex, becoming a scaffolding protein for downstream effectors, triggering activation of the NF-kappa-B and MAP kinases signaling. This in turn leads to the transcriptional activation of hundreds of genes involved in immune response. Its ability to detect bacterial MDP plays a central role in maintaining the equilibrium between intestinal microbiota and host immune responses to control inflammation. An imbalance in this relationship results in dysbiosis, whereby pathogenic bacteria prevail on commensals, causing damage in the intestinal epithelial barrier as well as allowing bacterial invasion and inflammation. Acts as a regulator of appetite by sensing MDP in a subset of brain neurons: microbiota-derived MDP reach the brain, where they bind and activate NOD2 in inhibitory hypothalamic neurons, decreasing neuronal activity, thereby regulating satiety and body temperature. NOD2-dependent MDP-sensing of bacterial cell walls in the intestinal epithelial compartment contributes to sustained postnatal growth upon undernutrition. Also plays a role in antiviral response by acting as a sensor of single-stranded RNA (ssRNA) from viruses: upon ssRNA-binding, interacts with MAVS, leading to activation of interferon regulatory factor-3/IRF3 and expression of type I interferon. Also acts as a regulator of autophagy in dendritic cells via its interaction with ATG16L1, possibly by recruiting ATG16L1 at the site of bacterial entry. NOD2 activation in the small intestine crypt also contributes to intestinal stem cells survival and function: acts by promoting mitophagy via its association with ATG16L1. In addition to its main role in innate immunity, also regulates the adaptive immune system by acting as regulator of helper T-cell and regulatory T-cells (Tregs). Besides recognizing pathogens, also involved in the endoplasmic reticulum stress response: acts by sensing and binding to the cytosolic metabolite sphingosine-1-phosphate generated in response to endoplasmic reticulum stress, initiating an inflammation process that leads to activation of the NF-kappa-B and MAP kinases signaling. May also be involved in NLRP1 activation following activation by MDP, leading to CASP1 activation and IL1B release in macrophages. The polypeptide is Nucleotide-binding oligomerization domain-containing protein 2 (Oryctolagus cuniculus (Rabbit)).